The chain runs to 691 residues: MAVKVEYDLKRLRNIGIAAHIDAGKTTTTERILYYTGRIHKIGEVHEGAATMDFMEQERERGITITAAVTTCFWKDHRINIIDTPGHVDFTIEVERSMRVLDGAIVVFDSSQGVEPQSETVWRQAEKYKVPRIAFANKMDKTGADLWLVIRTMQERLGARPVVMQLPIGREDTFSGIIDVLRMKAYTYGNDLGTDIREIPIPEEYLDQAREYHEKLVEVAADFDENIMLKYLEGEEPTEEELVAAIRKGTIDLKITPVFLGSALKNKGVQLLLDAVVDYLPSPLDIPPIKGTTPEGEVVEIHPDPNGPLAALAFKIMADPYVGRLTFIRVYSGTLTSGSYVYNTTKGRKERVARLLRMHANHREEVEELKAGDLGAVVGLKETITGDTLVGEDAPRVILESIEVPEPVIDVAIEPKTKADQEKLSQALARLAEEDPTFRVSTHPETGQTIISGMGELHLEIIVDRLKREFKVDANVGKPQVAYRETITKPVDVEGKFIRQTGGRGQYGHVKIKVEPLPRGSGFEFVNAIVGGVIPKEYIPAVQKGIEEAMQSGPLIGFPVVDIKVTLYDGSYHEVDSSEMAFKIAGSMAIKEAVQKGDPVILEPIMRVEVTTPEEYMGDVIGDLNARRGQILGMEPRGNAQVIRAFVPLAEMFGYATDLRSKTQGRGSFVMFFDHYQEVPKQVQEKLIKGQ.

Residues 10-284 enclose the tr-type G domain; it reads KRLRNIGIAA…AVVDYLPSPL (275 aa). Residues 19 to 26, 83 to 87, and 137 to 140 contribute to the GTP site; these read AHIDAGKT, DTPGH, and NKMD.

Belongs to the TRAFAC class translation factor GTPase superfamily. Classic translation factor GTPase family. EF-G/EF-2 subfamily.

The protein localises to the cytoplasm. In terms of biological role, catalyzes the GTP-dependent ribosomal translocation step during translation elongation. During this step, the ribosome changes from the pre-translocational (PRE) to the post-translocational (POST) state as the newly formed A-site-bound peptidyl-tRNA and P-site-bound deacylated tRNA move to the P and E sites, respectively. Catalyzes the coordinated movement of the two tRNA molecules, the mRNA and conformational changes in the ribosome. The protein is Elongation factor G (fusA) of Thermus thermophilus (strain ATCC 27634 / DSM 579 / HB8).